The sequence spans 197 residues: Holliday junction resolvase RecU (197 aa).

Mg(2+) is bound by residues Thr82, Asp84, Glu97, and Gln116.

This sequence belongs to the RecU family. Mg(2+) serves as cofactor.

Its subcellular location is the cytoplasm. The catalysed reaction is Endonucleolytic cleavage at a junction such as a reciprocal single-stranded crossover between two homologous DNA duplexes (Holliday junction).. Functionally, endonuclease that resolves Holliday junction intermediates in genetic recombination. Cleaves mobile four-strand junctions by introducing symmetrical nicks in paired strands. Promotes annealing of linear ssDNA with homologous dsDNA. Required for DNA repair, homologous recombination and chromosome segregation. The chain is Holliday junction resolvase RecU from Streptococcus mutans serotype c (strain ATCC 700610 / UA159).